The following is a 165-amino-acid chain: Ecotin-like protein 4 (165 aa).

It belongs to the protease inhibitor I11 (ecotin) family.

This chain is Ecotin-like protein 4, found in Trypanosoma brucei brucei (strain 927/4 GUTat10.1).